The following is a 766-amino-acid chain: Flocculation suppression protein (766 aa).

5 disordered regions span residues 1-52, 129-181, 203-247, 547-619, and 657-766; these read MSEE…HGSK, HDHS…PTKI, KRRA…SSNS, KPVP…SISG, and SVTP…KVKM. Composition is skewed to low complexity over residues 8 to 19 and 134 to 147; these read SAPAPASTPAPA and NDAN…TNDD. The DNA-binding element occupies 64–186; the sequence is IFIHKLYQIL…NPTKIWEFKH (123 aa). The segment covering 171–181 has biased composition (basic and acidic residues); that stretch reads QEKEKSNPTKI. Low complexity predominate over residues 208 to 224; it reads SRNNSSINSRKNSSNQN. A Phosphoserine modification is found at Ser-220. The span at 236 to 247 shows a compositional bias: polar residues; that stretch reads SSIQDPSTSSNS. A Phosphoserine modification is found at Ser-556. Residues 679–699 are compositionally biased toward polar residues; that stretch reads AVSSNLINSPMNVEHSSSLSQ. Positions 708–719 are enriched in low complexity; the sequence is LPQPSLPTTSTT. Ser-733 carries the phosphoserine modification. Positions 738 to 750 are enriched in polar residues; sequence LLNQEDSSTSSAD.

The protein in the N-terminal section; belongs to the HSF family.

The protein resides in the nucleus. In terms of biological role, involved in cell surface assembly and regulation of the gene related to flocculation (asexual cell aggregation). Mutations in SFL1 causes constitutive cell aggregation. This Saccharomyces cerevisiae (strain ATCC 204508 / S288c) (Baker's yeast) protein is Flocculation suppression protein (SFL1).